We begin with the raw amino-acid sequence, 354 residues long: Guanine nucleotide-binding protein G(i) subunit alpha-1 (354 aa).

A lipid anchor (N-myristoyl glycine) is attached at glycine 2. The S-palmitoyl cysteine moiety is linked to residue cysteine 3. The G-alpha domain occupies 32–354 (REVKLLLLGA…KNNLKDCGLF (323 aa)). The tract at residues 35 to 48 (KLLLLGAGESGKST) is G1 motif. GTP contacts are provided by residues 43–48 (ESGKST), 150–151 (DS), and 175–178 (LRTR). Serine 47 provides a ligand contact to Mg(2+). The tract at residues 173-181 (DVLRTRVKT) is G2 motif. Threonine 181 is a binding site for Mg(2+). Residues 196–205 (FKMFDVGGQR) form a G3 motif region. Residues 200-204 (DVGGQ), 269-272 (NKKD), and alanine 326 contribute to the GTP site. The tract at residues 265-272 (ILFLNKKD) is G4 motif. Residues 324-329 (TCATDT) are G5 motif.

This sequence belongs to the G-alpha family. G(i/o/t/z) subfamily. In terms of assembly, heterotrimeric G proteins are composed of 3 units; alpha, beta and gamma. The alpha chain contains the guanine nucleotide binding site. Part of a spindle orientation complex. Identified in complex with the beta subunit GNB1 and the gamma subunit GNG1. Identified in complex with the beta subunit GNB1 and the gamma subunit GNG2. GTP binding causes dissociation of the heterotrimer, liberating the individual subunits so that they can interact with downstream effector proteins. In terms of processing, myristoylation at Gly-2 is required for membrane anchoring before palmitoylation. Post-translationally, palmitoylation at Cys-3 varies with membrane lipid composition.

It localises to the nucleus. Its subcellular location is the cytoplasm. It is found in the cell membrane. The protein resides in the cytoskeleton. The protein localises to the microtubule organizing center. It localises to the centrosome. Its subcellular location is the cell cortex. It is found in the membrane. It carries out the reaction GTP + H2O = GDP + phosphate + H(+). Its function is as follows. Guanine nucleotide-binding proteins (G proteins) function as transducers downstream of G protein-coupled receptors (GPCRs) in numerous signaling cascades. The alpha chain contains the guanine nucleotide binding site and alternates between an active, GTP-bound state and an inactive, GDP-bound state. Signaling by an activated GPCR promotes GDP release and GTP binding. The alpha subunit has a low GTPase activity that converts bound GTP to GDP, thereby terminating the signal. Both GDP release and GTP hydrolysis are modulated by numerous regulatory proteins. Signaling is mediated via effector proteins, such as adenylate cyclase. Inhibits adenylate cyclase activity of ADCY1, ADCY5 and ADCY6, leading to decreased intracellular cAMP levels. Required for cortical dynein-dynactin complex recruitment during metaphase. The sequence is that of Guanine nucleotide-binding protein G(i) subunit alpha-1 (GNAI1) from Gallus gallus (Chicken).